Reading from the N-terminus, the 116-residue chain is Large ribosomal subunit protein bL20 (116 aa).

Belongs to the bacterial ribosomal protein bL20 family.

Its function is as follows. Binds directly to 23S ribosomal RNA and is necessary for the in vitro assembly process of the 50S ribosomal subunit. It is not involved in the protein synthesizing functions of that subunit. The sequence is that of Large ribosomal subunit protein bL20 from Helicobacter pylori (strain G27).